A 161-amino-acid polypeptide reads, in one-letter code: Pupal cuticle protein C1B (161 aa).

Tandem repeats lie at residues 6-9, 14-17, 35-38, 87-90, 103-106, 112-115, 121-124, 130-133, and 143-146.

Functionally, component of the cuticle of the pupa of Tenebrio molitor. The polypeptide is Pupal cuticle protein C1B (Tenebrio molitor (Yellow mealworm beetle)).